We begin with the raw amino-acid sequence, 238 residues long: Opacity protein opA60 (238 aa).

Residue A1 is a signal peptide.

Belongs to the opacity porin family.

Its subcellular location is the cell outer membrane. In terms of biological role, implicated in a number of adherence functions. OPA proteins are implicated in pathogenesis and are subject to phase variation. The polypeptide is Opacity protein opA60 (opaH) (Neisseria gonorrhoeae).